Consider the following 497-residue polypeptide: Probable cytosol aminopeptidase (497 aa).

Mn(2+) contacts are provided by Lys-263 and Asp-268. Lys-275 is a catalytic residue. Residues Asp-286, Asp-345, and Glu-347 each contribute to the Mn(2+) site. Arg-349 is a catalytic residue.

It belongs to the peptidase M17 family. Requires Mn(2+) as cofactor.

It localises to the cytoplasm. The catalysed reaction is Release of an N-terminal amino acid, Xaa-|-Yaa-, in which Xaa is preferably Leu, but may be other amino acids including Pro although not Arg or Lys, and Yaa may be Pro. Amino acid amides and methyl esters are also readily hydrolyzed, but rates on arylamides are exceedingly low.. It carries out the reaction Release of an N-terminal amino acid, preferentially leucine, but not glutamic or aspartic acids.. In terms of biological role, presumably involved in the processing and regular turnover of intracellular proteins. Catalyzes the removal of unsubstituted N-terminal amino acids from various peptides. This Methylorubrum extorquens (strain CM4 / NCIMB 13688) (Methylobacterium extorquens) protein is Probable cytosol aminopeptidase.